We begin with the raw amino-acid sequence, 320 residues long: tRNA U34 carboxymethyltransferase (320 aa).

Carboxy-S-adenosyl-L-methionine contacts are provided by residues lysine 87, tryptophan 101, lysine 106, glycine 126, 148-150 (EPS), 176-177 (VE), methionine 192, tyrosine 196, and arginine 311.

This sequence belongs to the class I-like SAM-binding methyltransferase superfamily. CmoB family. Homotetramer.

The enzyme catalyses carboxy-S-adenosyl-L-methionine + 5-hydroxyuridine(34) in tRNA = 5-carboxymethoxyuridine(34) in tRNA + S-adenosyl-L-homocysteine + H(+). In terms of biological role, catalyzes carboxymethyl transfer from carboxy-S-adenosyl-L-methionine (Cx-SAM) to 5-hydroxyuridine (ho5U) to form 5-carboxymethoxyuridine (cmo5U) at position 34 in tRNAs. In Desulfotalea psychrophila (strain LSv54 / DSM 12343), this protein is tRNA U34 carboxymethyltransferase.